The following is a 384-amino-acid chain: Mitogen-activated protein kinase 8 (384 aa).

Positions Tyr-26–Ile-321 constitute a Protein kinase domain. ATP-binding positions include Ile-32 to Val-40 and Lys-55. At Cys-116 the chain carries S-nitrosocysteine. Residue Asp-151 is the Proton acceptor of the active site. At Thr-183 the chain carries Phosphothreonine; by MAP2K7. Positions Thr-183 to Tyr-185 match the TXY motif. Tyr-185 carries the phosphotyrosine; by MAP2K4 modification. At Ser-377 the chain carries Phosphoserine.

This sequence belongs to the protein kinase superfamily. CMGC Ser/Thr protein kinase family. MAP kinase subfamily. In terms of assembly, binds to at least four scaffolding proteins, MAPK8IP1/JIP-1, MAPK8IP2/JIP-2, MAPK8IP3/JIP-3/JSAP1 and SPAG9/MAPK8IP4/JIP-4. These proteins also bind other components of the JNK signaling pathway. Forms a complex with MAPK8IP1 and ARHGEF28. Interacts with TP53 and WWOX. Interacts with JAMP. Interacts with NFATC4. Interacts with MECOM; regulates JNK signaling. Interacts with PIN1; this interaction mediates MAPK8 conformational changes leading to the binding of MAPK8 to its substrates. Interacts with HSF1 (via D domain and preferentially with hyperphosphorylated form); this interaction occurs under both normal growth conditions and immediately upon heat shock. Interacts (phosphorylated form) with NFE2; the interaction phosphorylates NFE2 in undifferentiated cells. Interacts with GRIPAP1. Interacts with POU5F1; phosphorylates POU5F1 at 'Ser-347'. Found in a complex with SH3RF1, RAC1, MAP3K11/MLK3, MAP2K7/MKK7 and MAPK8IP1/JIP1. Found in a complex with SH3RF1, RAC2, MAP3K7/TAK1, MAP2K7/MKK7, MAPK8IP1/JIP1 and MAPK9/JNK2. It depends on Mg(2+) as a cofactor. Phosphorylated by TAOK2. Dually phosphorylated on Thr-183 and Tyr-185 by MAP2K7 and MAP2K4, which activates the enzyme. May be phosphorylated at Thr-183 and Tyr-185 by MAP3K1/MEKK1. Phosphorylated form is more concentrated at synapses than none-phosphorylated. As to expression, brain (at protein level).

It is found in the cytoplasm. The protein localises to the nucleus. Its subcellular location is the synapse. It carries out the reaction L-seryl-[protein] + ATP = O-phospho-L-seryl-[protein] + ADP + H(+). It catalyses the reaction L-threonyl-[protein] + ATP = O-phospho-L-threonyl-[protein] + ADP + H(+). Inhibited by SERPINB3. Activated by threonine and tyrosine phosphorylation by either of two dual specificity kinases, MAP2K4 and MAP2K7. MAP2K4 shows a strong preference for Tyr-185 while MAP2K7 phosphorylates Tyr-183 preferentially. Inhibited by dual specificity phosphatases, such as DUSP1. Serine/threonine-protein kinase involved in various processes such as cell proliferation, differentiation, migration, transformation and programmed cell death. Extracellular stimuli such as pro-inflammatory cytokines or physical stress stimulate the stress-activated protein kinase/c-Jun N-terminal kinase (SAP/JNK) signaling pathway. In this cascade, two dual specificity kinases MAP2K4/MKK4 and MAP2K7/MKK7 phosphorylate and activate MAPK8/JNK1. In turn, MAPK8/JNK1 phosphorylates a number of transcription factors, primarily components of AP-1 such as JUN, JDP2 and ATF2 and thus regulates AP-1 transcriptional activity. Phosphorylates the replication licensing factor CDT1, inhibiting the interaction between CDT1 and the histone H4 acetylase HBO1 to replication origins. Loss of this interaction abrogates the acetylation required for replication initiation. Promotes stressed cell apoptosis by phosphorylating key regulatory factors including p53/TP53 and Yes-associates protein YAP1. In T-cells, MAPK8 and MAPK9 are required for polarized differentiation of T-helper cells into Th1 cells. Contributes to the survival of erythroid cells by phosphorylating the antagonist of cell death BAD upon EPO stimulation. Mediates starvation-induced BCL2 phosphorylation, BCL2 dissociation from BECN1, and thus activation of autophagy. Phosphorylates STMN2 and hence regulates microtubule dynamics, controlling neurite elongation in cortical neurons. In the developing brain, through its cytoplasmic activity on STMN2, negatively regulates the rate of exit from multipolar stage and of radial migration from the ventricular zone. Phosphorylates several other substrates including heat shock factor protein 4 (HSF4), the deacetylase SIRT1, ELK1, or the E3 ligase ITCH. Phosphorylates the CLOCK-BMAL1 heterodimer and plays a role in the regulation of the circadian clock. Phosphorylates the heat shock transcription factor HSF1, suppressing HSF1-induced transcriptional activity. Phosphorylates POU5F1, which results in the inhibition of POU5F1's transcriptional activity and enhances its proteasomal degradation. Phosphorylates JUND and this phosphorylation is inhibited in the presence of MEN1. In neurons, phosphorylates SYT4 which captures neuronal dense core vesicles at synapses. Phosphorylates EIF4ENIF1/4-ET in response to oxidative stress, promoting P-body assembly. Phosphorylates SIRT6 in response to oxidative stress, stimulating its mono-ADP-ribosyltransferase activity. Phosphorylates NLRP3, promoting assembly of the NLRP3 inflammasome. Phosphorylates ALKBH5 in response to reactive oxygen species (ROS), promoting ALKBH5 sumoylation and inactivation. The protein is Mitogen-activated protein kinase 8 (Mapk8) of Mus musculus (Mouse).